The following is a 35-amino-acid chain: Photosystem II reaction center protein T (35 aa).

A helical transmembrane segment spans residues 3–23 (ALVYTFLLVSTLGIIFFAIFF).

Belongs to the PsbT family. In terms of assembly, PSII is composed of 1 copy each of membrane proteins PsbA, PsbB, PsbC, PsbD, PsbE, PsbF, PsbH, PsbI, PsbJ, PsbK, PsbL, PsbM, PsbT, PsbY, PsbZ, Psb30/Ycf12, at least 3 peripheral proteins of the oxygen-evolving complex and a large number of cofactors. It forms dimeric complexes.

It is found in the plastid. It localises to the chloroplast thylakoid membrane. Its function is as follows. Found at the monomer-monomer interface of the photosystem II (PS II) dimer, plays a role in assembly and dimerization of PSII. PSII is a light-driven water plastoquinone oxidoreductase, using light energy to abstract electrons from H(2)O, generating a proton gradient subsequently used for ATP formation. This chain is Photosystem II reaction center protein T, found in Citrus sinensis (Sweet orange).